Consider the following 396-residue polypeptide: 2-(3-amino-3-carboxypropyl)histidine synthase subunit 1 (396 aa).

Positions 89, 194, and 323 each coordinate [4Fe-4S] cluster. The segment at 372–396 (TNNNEANRPKREKRKPHIVVRTEAS) is disordered.

Belongs to the DPH1/DPH2 family. DPH1 subfamily. As to quaternary structure, component of the 2-(3-amino-3-carboxypropyl)histidine synthase complex composed of dph-1, dph-2, dph-3 and a NADH-dependent reductase. It depends on [4Fe-4S] cluster as a cofactor.

The enzyme catalyses L-histidyl-[translation elongation factor 2] + S-adenosyl-L-methionine = 2-[(3S)-amino-3-carboxypropyl]-L-histidyl-[translation elongation factor 2] + S-methyl-5'-thioadenosine + H(+). The protein operates within protein modification; peptidyl-diphthamide biosynthesis. Catalyzes the first step of diphthamide biosynthesis, a post-translational modification of histidine which occurs in elongation factor 2. Dph-1 and dph-2 transfer a 3-amino-3-carboxypropyl (ACP) group from S-adenosyl-L-methionine (SAM) to a histidine residue, the reaction is assisted by a reduction system comprising dph-3 and a NADH-dependent reductase. This chain is 2-(3-amino-3-carboxypropyl)histidine synthase subunit 1 (dph-1), found in Caenorhabditis elegans.